Reading from the N-terminus, the 104-residue chain is Large ribosomal subunit protein uL24 (104 aa).

It belongs to the universal ribosomal protein uL24 family. Part of the 50S ribosomal subunit. Post-translationally, a methylated and unmethylated form are thought to exist.

Functionally, one of two assembly initiator proteins, it binds directly to the 5'-end of the 23S rRNA, where it nucleates assembly of the 50S subunit. Its function is as follows. One of the proteins that surrounds the polypeptide exit tunnel on the outside of the subunit. This chain is Large ribosomal subunit protein uL24, found in Rhodopseudomonas palustris (strain ATCC BAA-98 / CGA009).